A 475-amino-acid chain; its full sequence is 3-keto-steroid reductase ERG27 (475 aa).

Ile32, Ile55, Thr59, and Lys65 together coordinate NADP(+). Catalysis depends on proton donor residues Ser249 and Tyr272. NADP(+) contacts are provided by Tyr272, Lys276, Val324, and Ser326. Lys276 (lowers pKa of active site Tyr) is an active-site residue.

It belongs to the short-chain dehydrogenases/reductases (SDR) family. ERG27 subfamily. As to quaternary structure, heterotetramer of ERG25, ERG26, ERG27 and ERG28. ERG28 acts as a scaffold to tether ERG27 and other 4,4-demethylation-related enzymes, forming a demethylation enzyme complex, in the endoplasmic reticulum.

The protein localises to the endoplasmic reticulum membrane. The protein resides in the lipid droplet. It participates in steroid metabolism; ergosterol biosynthesis. Its function is as follows. 3-keto-steroid reductase; part of the third module of ergosterol biosynthesis pathway that includes the late steps of the pathway. ERG27 is a catalytic component of the C-4 demethylation complex that catalyzes the conversion of 4,4-dimethylfecosterol into fecosterol via 4-methylfecosterol. The third module or late pathway involves the ergosterol synthesis itself through consecutive reactions that mainly occur in the endoplasmic reticulum (ER) membrane. Firstly, the squalene synthase ERG9 catalyzes the condensation of 2 farnesyl pyrophosphate moieties to form squalene, which is the precursor of all steroids. Squalene synthase is crucial for balancing the incorporation of farnesyl diphosphate (FPP) into sterol and nonsterol isoprene synthesis. Secondly, squalene is converted into lanosterol by the consecutive action of the squalene epoxidase ERG1 and the lanosterol synthase ERG7. Then, the delta(24)-sterol C-methyltransferase ERG6 methylates lanosterol at C-24 to produce eburicol. Eburicol is the substrate of the sterol 14-alpha demethylase encoded by CYP51A, CYP51B and CYP51C, to yield 4,4,24-trimethyl ergosta-8,14,24(28)-trienol. CYP51B encodes the enzyme primarily responsible for sterol 14-alpha-demethylation, and plays an essential role in ascospore formation. CYP51A encodes an additional sterol 14-alpha-demethylase, induced on ergosterol depletion and responsible for the intrinsic variation in azole sensitivity. The third CYP51 isoform, CYP51C, does not encode a sterol 14-alpha-demethylase, but is required for full virulence on host wheat ears. The C-14 reductase ERG24 then reduces the C14=C15 double bond which leads to 4,4-dimethylfecosterol. A sequence of further demethylations at C-4, involving the C-4 demethylation complex containing the C-4 methylsterol oxidases ERG25, the sterol-4-alpha-carboxylate 3-dehydrogenase ERG26 and the 3-keto-steroid reductase ERG27, leads to the production of fecosterol via 4-methylfecosterol. ERG28 has a role as a scaffold to help anchor ERG25, ERG26 and ERG27 to the endoplasmic reticulum. The C-8 sterol isomerase ERG2 then catalyzes the reaction which results in unsaturation at C-7 in the B ring of sterols and thus converts fecosterol to episterol. The sterol-C5-desaturases ERG3A and ERG3BB then catalyze the introduction of a C-5 double bond in the B ring to produce 5-dehydroepisterol. The C-22 sterol desaturases ERG5A and ERG5B further convert 5-dehydroepisterol into ergosta-5,7,22,24(28)-tetraen-3beta-ol by forming the C-22(23) double bond in the sterol side chain. Finally, ergosta-5,7,22,24(28)-tetraen-3beta-ol is substrate of the C-24(28) sterol reductase ERG4 to produce ergosterol. The chain is 3-keto-steroid reductase ERG27 from Gibberella zeae (strain ATCC MYA-4620 / CBS 123657 / FGSC 9075 / NRRL 31084 / PH-1) (Wheat head blight fungus).